The primary structure comprises 745 residues: Phosphate transporter PHO1 homolog 4 (745 aa).

An SPX domain is found at 1-290 (MRFGKEFVSQ…KRNAAKLYME (290 aa)). Residues 1–342 (MRFGKEFVSQ…KINKERHLIT (342 aa)) lie on the Cytoplasmic side of the membrane. The chain crosses the membrane as a helical span at residues 343-363 (FSTGFFFGCGISLIVALGLII). Topologically, residues 364 to 383 (HARNIMGTPGQRTYMETMFP) are extracellular. Residues 384–404 (LYRFFGFVVLHMDVYAANIYF) form a helical membrane-spanning segment. The Cytoplasmic segment spans residues 405-427 (WRRYRVNYSFIFGFKQGTELGYR). Residues 428–448 (HVLLLSFGLGTLSLCAVLLNL) form a helical membrane-spanning segment. Over 449–464 (DMEMDAQTKDYRLVTE) the chain is Extracellular. A helical membrane pass occupies residues 465–485 (LIPLFLLVLVIIIVLCPFNIL). At 486–615 (YRSSRFFFLS…YTLNRGSNWN (130 aa)) the chain is on the cytoplasmic side. Residues 550 to 744 (TSNIGFRTFY…NYEEDGDHHN (195 aa)) form the EXS domain. A helical membrane pass occupies residues 616-636 (ITAWVFSGVATFYGTYWDIVL). The Extracellular portion of the chain corresponds to 637–660 (DWGLLQRGCKNSFLRDKLLVPHKT). The chain crosses the membrane as a helical span at residues 661-681 (VYYAAMVLNVLLRLVWLQTVL). Residues 682–745 (DLKFSFLHRE…YEEDGDHHNN (64 aa)) lie on the Cytoplasmic side of the membrane.

This sequence belongs to the SYG1 (TC 2.A.94) family. Expressed in root epidermis and cortex, leaf hydathodes, pollen grains and stigma apex.

It localises to the cell membrane. In terms of biological role, may transport inorganic phosphate (Pi). The polypeptide is Phosphate transporter PHO1 homolog 4 (PHO1-H4) (Arabidopsis thaliana (Mouse-ear cress)).